Reading from the N-terminus, the 128-residue chain is Cytochrome c' (128 aa).

Heme c-binding residues include Q13, Q17, E69, T70, C118, C121, and H122.

Post-translationally, binds 1 heme c group covalently per subunit.

Functionally, cytochrome c' is the most widely occurring bacterial c-type cytochrome. Cytochromes c' are high-spin proteins and the heme has no sixth ligand. Their exact function is not known. This Magnetospirillum fulvum (Rhodospirillum fulvum) protein is Cytochrome c'.